The following is a 1524-amino-acid chain: Protein dispatched homolog 1 (1524 aa).

Asn59 carries N-linked (GlcNAc...) asparagine glycosylation. Transmembrane regions (helical) follow at residues 190–210 (VVVL…GVLV), 500–520 (LLMD…VMCV), 525–545 (MFIT…SYFL), and 549–569 (VFHF…LVGI). The region spanning 486–658 (GIEFGIKHSL…VTWLPAVVVL (173 aa)) is the SSD domain. A glycan (N-linked (GlcNAc...) asparagine) is linked at Asn582. 8 consecutive transmembrane segments (helical) span residues 604-624 (AALS…ANYV), 638-658 (GTAI…VVVL), 719-739 (YLWL…VCIN), 988-1008 (MGLS…NIII), 1010-1030 (LYAI…LVLL), 1040-1060 (VTIS…GVAY), 1079-1099 (VGSA…MMMP), and 1107-1127 (QLGT…TFFF).

This sequence belongs to the dispatched family. In terms of assembly, interacts with SHH via the cholesterol anchor of the dually lipid-modified SHH (ShhNp).

It is found in the membrane. Functionally, functions in hedgehog (Hh) signaling. Regulates the release and extracellular accumulation of cholesterol-modified hedgehog proteins and is hence required for effective production of the Hh signal. Synergizes with SCUBE2 to cause an increase in SHH secretion. The chain is Protein dispatched homolog 1 (DISP1) from Homo sapiens (Human).